The following is a 489-amino-acid chain: Otolin-1-A (489 aa).

The first 23 residues, M1 to A23, serve as a signal peptide directing secretion. The tract at residues K27–V57 is disordered. An N-linked (GlcNAc...) asparagine glycan is attached at N109. The disordered stretch occupies residues G133–K335. Residues G142–G151 are compositionally biased toward gly residues. Collagen-like domains follow at residues G145 to K204, G205 to K255, and G264 to R323. A compositionally biased stretch (basic and acidic residues) spans Q192–D206. Residue N225 is glycosylated (N-linked (GlcNAc...) asparagine). Gly residues predominate over residues G226–G235. Residues I248–D257 are compositionally biased toward basic and acidic residues. Residue N287 is glycosylated (N-linked (GlcNAc...) asparagine). Over residues D290–E310 the composition is skewed to low complexity. One can recognise a C1q domain in the interval A351–K488. 2 N-linked (GlcNAc...) asparagine glycosylation sites follow: N391 and N396.

Belongs to the OTOL1 family. In terms of assembly, homooligomer; disulfide-linked; probably forms homotrimers. Interacts with otomp.

Its subcellular location is the secreted. The protein localises to the extracellular space. It is found in the extracellular matrix. In terms of biological role, collagen-like protein, which provides an organic scaffold for otoliths onto the sensory epithelium of the inner ear. Acts as a scaffold for biomineralization by sequestering calcium. The chain is Otolin-1-A (otol1a) from Danio rerio (Zebrafish).